Here is a 242-residue protein sequence, read N- to C-terminus: NAD-dependent protein deacetylase 1 (242 aa).

Residues Met-1 to Pro-242 enclose the Deacetylase sirtuin-type domain. Residues Ala-19, Thr-23, Phe-30, Arg-31, Gln-97, Val-99, Asp-100, and His-115 each contribute to the NAD(+) site. Residue Phe-30 participates in nicotinamide binding. Residues Val-99 and Asp-100 each coordinate nicotinamide. The active-site Proton acceptor is the His-115. 4 residues coordinate Zn(2+): Cys-123, Cys-126, Cys-142, and Cys-144. NAD(+) contacts are provided by Ser-182, Ser-183, Asn-207, and Ile-226.

Belongs to the sirtuin family. Class U subfamily. Zn(2+) serves as cofactor.

It is found in the cytoplasm. It catalyses the reaction N(6)-acetyl-L-lysyl-[protein] + NAD(+) + H2O = 2''-O-acetyl-ADP-D-ribose + nicotinamide + L-lysyl-[protein]. Its function is as follows. NAD-dependent protein deacetylase which modulates the activities of several enzymes which are inactive in their acetylated form. The polypeptide is NAD-dependent protein deacetylase 1 (Geobacillus kaustophilus (strain HTA426)).